Reading from the N-terminus, the 322-residue chain is MGAPTERLVDTNGVRLRVVEAGEPGAPVVILAHGFPELAYSWRHQIPALADAGYHVLAPDQRGYGGSSRPEAIEAYDIHRLTADLVGLLDDVGAERAVWVGHDWGAVVVWNAPLLHADRVAAVAALSVPALPRAQVPPTQAFRSRFGENFFYILYFQEPGIADAELNGDPARTMRRMIGGLRPPGDQSAAMRMLAPGPDGFIDRLPEPAGLPAWISQEELDHYIGEFTRTGFTGGLNWYRNFDRNWETTADLAGKTISVPSLFIAGTADPVLTFTRTDRAAEVISGPYREVLIDGAGHWLQQERPGEVTAALLEFLTGLELR.

The 105-residue stretch at Pro-27–Leu-131 folds into the AB hydrolase-1 domain. Asp-103 (nucleophile) is an active-site residue. The Proton acceptor role is filled by His-298.

This sequence belongs to the AB hydrolase superfamily. Epoxide hydrolase family. Homodimer.

The catalysed reaction is an epoxide + H2O = an ethanediol. Its function is as follows. Could be involved in detoxification of extraneous host-cell epoxides. Catalyzes the hydrolysis of epoxide-containing substrates. This is Epoxide hydrolase A (ephA) from Mycobacterium tuberculosis (strain ATCC 25618 / H37Rv).